Here is a 134-residue protein sequence, read N- to C-terminus: Small ribosomal subunit protein uS8c (134 aa).

Belongs to the universal ribosomal protein uS8 family. As to quaternary structure, part of the 30S ribosomal subunit.

It is found in the plastid. The protein resides in the chloroplast. One of the primary rRNA binding proteins, it binds directly to 16S rRNA central domain where it helps coordinate assembly of the platform of the 30S subunit. This is Small ribosomal subunit protein uS8c (rps8) from Chloranthus spicatus (Chulantree).